The primary structure comprises 160 residues: Phosphoribosyl-ATP pyrophosphatase (160 aa).

Belongs to the PRA-PH family.

It localises to the cytoplasm. The enzyme catalyses 1-(5-phospho-beta-D-ribosyl)-ATP + H2O = 1-(5-phospho-beta-D-ribosyl)-5'-AMP + diphosphate + H(+). It functions in the pathway amino-acid biosynthesis; L-histidine biosynthesis; L-histidine from 5-phospho-alpha-D-ribose 1-diphosphate: step 2/9. In Granulibacter bethesdensis (strain ATCC BAA-1260 / CGDNIH1), this protein is Phosphoribosyl-ATP pyrophosphatase.